A 524-amino-acid polypeptide reads, in one-letter code: Putative ribose/galactose/methyl galactoside import ATP-binding protein 1 (524 aa).

2 ABC transporter domains span residues 35–271 (LEVR…VGRE) and 281–520 (VPIG…RIMD). An ATP-binding site is contributed by 67 to 74 (GENGAGKS).

The protein belongs to the ABC transporter superfamily. Carbohydrate importer 2 (CUT2) (TC 3.A.1.2) family.

The protein resides in the cell inner membrane. The enzyme catalyses D-ribose(out) + ATP + H2O = D-ribose(in) + ADP + phosphate + H(+). It carries out the reaction D-galactose(out) + ATP + H2O = D-galactose(in) + ADP + phosphate + H(+). Part of an ABC transporter complex involved in carbohydrate import. Could be involved in ribose, galactose and/or methyl galactoside import. Responsible for energy coupling to the transport system. This chain is Putative ribose/galactose/methyl galactoside import ATP-binding protein 1, found in Burkholderia cenocepacia (strain HI2424).